Consider the following 429-residue polypeptide: 3-phosphoshikimate 1-carboxyvinyltransferase (429 aa).

3-phosphoshikimate-binding residues include K23, S24, and R28. K23 is a phosphoenolpyruvate binding site. Phosphoenolpyruvate-binding residues include G95 and R123. 3-phosphoshikimate-binding residues include S168, Q170, D316, and K343. A phosphoenolpyruvate-binding site is contributed by Q170. D316 (proton acceptor) is an active-site residue. Phosphoenolpyruvate contacts are provided by R347 and R389.

Belongs to the EPSP synthase family. Monomer.

It is found in the cytoplasm. It carries out the reaction 3-phosphoshikimate + phosphoenolpyruvate = 5-O-(1-carboxyvinyl)-3-phosphoshikimate + phosphate. It functions in the pathway metabolic intermediate biosynthesis; chorismate biosynthesis; chorismate from D-erythrose 4-phosphate and phosphoenolpyruvate: step 6/7. In terms of biological role, catalyzes the transfer of the enolpyruvyl moiety of phosphoenolpyruvate (PEP) to the 5-hydroxyl of shikimate-3-phosphate (S3P) to produce enolpyruvyl shikimate-3-phosphate and inorganic phosphate. In Bacillus thuringiensis (strain Al Hakam), this protein is 3-phosphoshikimate 1-carboxyvinyltransferase.